Reading from the N-terminus, the 173-residue chain is MNFSIKATIRAWSAPEHKLACRKQLWRKIVAELERRGKRRHEAGTFLLGIERNGRKEVQSAVYYDDLDPSAYDSGVCILHGDAFAKLWSHCREKGLTVVADVHTHPGAGFQSDSDRTNPMVARQGHIAIILPNFARWPIRQGNLGIYEYCGQHEWLERSPAHAPNFFYTGFWS.

3 residues coordinate Zn(2+): His103, His105, and Asp115.

This sequence belongs to the M67B family. Requires Zn(2+) as cofactor.

In terms of biological role, component of the Bil (bacterial ISG15-like) antiviral defense system, composed of BilA, BilB, BilC and BilD. The Bil system specifically conjugates a ubiquitin-like moiety (bilA) to the bacteriophage central tail fiber (CTF, or tip attachment protein J) via reactions involving E1 (bilD) and E2 (bilB). Modifies CTF of phage SECphi27 and SECphi4, which probably interferes with assembly of the phage tail. Also modifies T5 baseplate hub protein pb3 (gene D16), but not gp27 of phage T6 (Bil defends against T6). BilC is a probable metalloprotease that may cleave non-specifically conjugated targets. Bil-encoding bacteria produce mostly defective phage SECphi27, many of which have phage assembly defects, including no tails. SECphi27 phage progeny produced in E.coli with the Bil system inject less DNA into naive host cells, maybe because the phage are less able to adsorb and inject their DNA into host cells. Expression of the Bil system in E.coli (strain MG1655) confers about 100-fold resistance to phage SECphi27, SECphi18, SECphi6, SECphi4 and T5, but not to SECphi17. When cells expressing the Bil system are infected by phage SECphi27 at low multiplicity of infection (0.03 MOI) the culture survives, at 3.0 MOI the culture collapses at the same time as cells without the Bil system. Its function is as follows. Cleaves a ubiquitin-GFP (Ubl-GFP) fusion protein in vivo. This is Bacterial deubiquitinase-like protein BilC from Collimonas sp. (strain OK412).